Consider the following 866-residue polypeptide: Paramyosin (866 aa).

The interval 1–22 (MMNHDTESHVKISRTIYRGVSP) is nonhelical region. Residues 23-839 (STTRLESRVR…AERTVTVRRV (817 aa)) adopt a coiled-coil conformation. Residues 840–866 (GPGGRAVSVARELSVTSNRGMRATSMM) form a nonhelical region region.

The protein belongs to the paramyosin family. In terms of assembly, homodimer.

It localises to the cytoplasm. Its subcellular location is the myofibril. Functionally, paramyosin is a major structural component of many thick filaments isolated from invertebrate muscles. The sequence is that of Paramyosin from Schistosoma japonicum (Blood fluke).